We begin with the raw amino-acid sequence, 218 residues long: uncharacterized protein (218 aa).

The segment at 1–67 (MARITNMGKR…KKKRSEYRRL (67 aa)) is disordered. Over residues 29–39 (NSSNTNEESSS) the composition is skewed to low complexity. Polar residues predominate over residues 40–49 (QDNMKASFGS). Residues 58–67 (KKKRSEYRRL) are compositionally biased toward basic residues. 3 consecutive CCHC-type zinc fingers follow at residues 77–94 (KFCF…DCPE), 100–117 (SICF…ACSK), and 124–141 (AKCF…QCEQ). The CCHC-type 4; atypical zinc finger occupies 152–168 (CCKFCSSVHHLAKDCDQ).

This is an uncharacterized protein from Schizosaccharomyces pombe (strain 972 / ATCC 24843) (Fission yeast).